A 96-amino-acid polypeptide reads, in one-letter code: Large ribosomal subunit protein eL21 (96 aa).

A disordered region spans residues 1 to 22 (MRKSKGFKSRSRYKLKRSIRPK).

Belongs to the eukaryotic ribosomal protein eL21 family.

The sequence is that of Large ribosomal subunit protein eL21 from Methanosphaera stadtmanae (strain ATCC 43021 / DSM 3091 / JCM 11832 / MCB-3).